Consider the following 158-residue polypeptide: Class 10 plant pathogenesis-related protein 2B (158 aa).

Asp8 contributes to the trans-zeatin binding site. Ca(2+) is bound by residues Pro32, Val35, and Ile38. Trans-zeatin-binding residues include Glu60, His69, Tyr81, and Tyr83. Residue Tyr83 participates in melatonin binding.

This sequence belongs to the BetVI family.

The protein localises to the cytoplasm. The protein resides in the cytosol. Class II ribonuclease (RNase). Binds to several cytokinins including natural adenine-type (e.g. trans-zeatin and kinetin) and artificial urea-type (e.g. N,N'-diphenylurea and N-phenyl-N'-(2-chloro-4-pyridyl)urea) hormones. Interacts with melatonin. This Lupinus luteus (European yellow lupine) protein is Class 10 plant pathogenesis-related protein 2B.